Here is an 82-residue protein sequence, read N- to C-terminus: MAVKMRLKRMGAKKAPFYRVVVADSRSPRDGRFVEEIGYYNPITEPSTIKLDEEKVQKWIKNGAQPTDTVKKLIEKAGISVK.

It belongs to the bacterial ribosomal protein bS16 family.

The polypeptide is Small ribosomal subunit protein bS16 (Clostridium botulinum (strain ATCC 19397 / Type A)).